A 207-amino-acid chain; its full sequence is Guanylate kinase (207 aa).

The Guanylate kinase-like domain occupies 17–197; sequence GRLVVLAGPS…SCDELVSLLV (181 aa). Position 24-31 (24-31) interacts with ATP; the sequence is GPSAVGKS.

Belongs to the guanylate kinase family.

The protein localises to the cytoplasm. The enzyme catalyses GMP + ATP = GDP + ADP. Its function is as follows. Essential for recycling GMP and indirectly, cGMP. The chain is Guanylate kinase from Rhodococcus jostii (strain RHA1).